We begin with the raw amino-acid sequence, 399 residues long: Probable peptidoglycan glycosyltransferase FtsW (399 aa).

Residues 1 to 32 (MMAGFAQTTITKINQFYERWMPRLPAEMTARN) lie on the Cytoplasmic side of the membrane. The chain crosses the membrane as a helical span at residues 33 to 53 (VLVFCVVCLLCIGSVMVASAS). Residues 54-72 (MPYAEYMHENPFHYVVRHA) lie on the Periplasmic side of the membrane. A helical transmembrane segment spans residues 73-93 (ISIATAAIVAYLVYKVPLNVW). The Cytoplasmic portion of the chain corresponds to 94-97 (FKNT). The helical transmembrane segment at 98–118 (FSFWLITILLLLAVLVIGTEV) threads the bilayer. Over 119 to 126 (NGSRRWIR) the chain is Periplasmic. A helical membrane pass occupies residues 127–147 (LAGFTLQPTEVAKVMMAIFTA). At 148-159 (DYVVRRAKEVRT) the chain is on the cytoplasmic side. The helical transmembrane segment at 160–180 (HWKGLVRLSGVMAITVGLIIA) threads the bilayer. Residues 181–183 (EPD) lie on the Periplasmic side of the membrane. The chain crosses the membrane as a helical span at residues 184-204 (LGATVVIVLMMVGIFFLAGAP). At 205–207 (PTQ) the chain is on the cytoplasmic side. Residues 208–228 (FAIMLGAVVMGIGFLILFEPY) form a helical membrane-spanning segment. Topologically, residues 229–292 (RLARAMSFTN…DFMLAVLGEE (64 aa)) are periplasmic. The chain crosses the membrane as a helical span at residues 293–313 (FGFVGISIVIGLSFIMLACCI). Over 314 to 327 (KIGHRALKHNFLRA) the chain is Cytoplasmic. Residues 328–348 (GYLAYGISIIFLLQIIVNAGM) traverse the membrane as a helical segment. Residues 349–359 (NMGLMPTKGLT) are Periplasmic-facing. The helical transmembrane segment at 360-380 (LPFISYGGTSLMMCAAMISLI) threads the bilayer. Residues 381–399 (LRIDASTQEINPDREESNF) lie on the Cytoplasmic side of the membrane.

It belongs to the SEDS family. FtsW subfamily.

Its subcellular location is the cell inner membrane. It catalyses the reaction [GlcNAc-(1-&gt;4)-Mur2Ac(oyl-L-Ala-gamma-D-Glu-L-Lys-D-Ala-D-Ala)](n)-di-trans,octa-cis-undecaprenyl diphosphate + beta-D-GlcNAc-(1-&gt;4)-Mur2Ac(oyl-L-Ala-gamma-D-Glu-L-Lys-D-Ala-D-Ala)-di-trans,octa-cis-undecaprenyl diphosphate = [GlcNAc-(1-&gt;4)-Mur2Ac(oyl-L-Ala-gamma-D-Glu-L-Lys-D-Ala-D-Ala)](n+1)-di-trans,octa-cis-undecaprenyl diphosphate + di-trans,octa-cis-undecaprenyl diphosphate + H(+). It participates in cell wall biogenesis; peptidoglycan biosynthesis. Peptidoglycan polymerase that is essential for cell division. The sequence is that of Probable peptidoglycan glycosyltransferase FtsW from Acinetobacter baylyi (strain ATCC 33305 / BD413 / ADP1).